The chain runs to 225 residues: ATP-dependent dethiobiotin synthetase BioD (225 aa).

ATP is bound at residue 12–17; the sequence is EVGKTY. Mg(2+) is bound at residue Thr-16. Lys-37 is an active-site residue. Position 41 (Ser-41) interacts with substrate. ATP contacts are provided by residues Asp-52, 114 to 117, and 174 to 175; these read EGAG and NC. Asp-52 and Glu-114 together coordinate Mg(2+).

Belongs to the dethiobiotin synthetase family. In terms of assembly, homodimer. Mg(2+) serves as cofactor.

It localises to the cytoplasm. The catalysed reaction is (7R,8S)-7,8-diammoniononanoate + CO2 + ATP = (4R,5S)-dethiobiotin + ADP + phosphate + 3 H(+). It functions in the pathway cofactor biosynthesis; biotin biosynthesis; biotin from 7,8-diaminononanoate: step 1/2. In terms of biological role, catalyzes a mechanistically unusual reaction, the ATP-dependent insertion of CO2 between the N7 and N8 nitrogen atoms of 7,8-diaminopelargonic acid (DAPA, also called 7,8-diammoniononanoate) to form a ureido ring. The chain is ATP-dependent dethiobiotin synthetase BioD from Francisella tularensis subsp. novicida (strain U112).